The primary structure comprises 592 residues: Methylenetetrahydrofolate reductase (NADH) 1 (592 aa).

The Proton donor/acceptor role is filled by E21. NAD(+) contacts are provided by residues 21–26 and 52–53; these read EFFPPK and TW. Residues 52-53, H81, 111-113, Y153, 157-160, D175, and K182 contribute to the FAD site; these read TW, RGD, and HPDV. D113 is a binding site for substrate. Q193 and Y285 together coordinate substrate.

Belongs to the methylenetetrahydrofolate reductase family. In terms of assembly, homodimer. It depends on FAD as a cofactor.

The catalysed reaction is (6S)-5-methyl-5,6,7,8-tetrahydrofolate + NAD(+) = (6R)-5,10-methylene-5,6,7,8-tetrahydrofolate + NADH + H(+). Its pathway is one-carbon metabolism; tetrahydrofolate interconversion. Plant MTHFRs strongly prefer NADH over NADPH. Not inhibited by methionine or S-adenosylmethionine. The probable reversibility of the MTHFR reaction in plants suggests that they can metabolize the methyl group of 5,10-methylenetetrahydrofolate to serine, sugars and starch. This is Methylenetetrahydrofolate reductase (NADH) 1 (MTHFR1) from Arabidopsis thaliana (Mouse-ear cress).